We begin with the raw amino-acid sequence, 370 residues long: Phospho-N-acetylmuramoyl-pentapeptide-transferase (370 aa).

Transmembrane regions (helical) follow at residues 15–35 (PLEG…AAFA), 44–64 (LLSL…WWGV), 93–113 (MGGL…SWSG), 115–135 (AAEQ…VGGI), 155–175 (LLLQ…RGWI), 183–203 (FDIN…VFLA), 213–233 (GLDG…ALQL), 240–260 (GDPS…GFLV), 268–288 (VFMG…VALL), 296–316 (LIMG…VWVF), and 347–367 (QLVV…GIFF).

The protein belongs to the glycosyltransferase 4 family. MraY subfamily. Mg(2+) serves as cofactor.

It is found in the cell inner membrane. It catalyses the reaction UDP-N-acetyl-alpha-D-muramoyl-L-alanyl-gamma-D-glutamyl-meso-2,6-diaminopimeloyl-D-alanyl-D-alanine + di-trans,octa-cis-undecaprenyl phosphate = di-trans,octa-cis-undecaprenyl diphospho-N-acetyl-alpha-D-muramoyl-L-alanyl-D-glutamyl-meso-2,6-diaminopimeloyl-D-alanyl-D-alanine + UMP. Its pathway is cell wall biogenesis; peptidoglycan biosynthesis. Its function is as follows. Catalyzes the initial step of the lipid cycle reactions in the biosynthesis of the cell wall peptidoglycan: transfers peptidoglycan precursor phospho-MurNAc-pentapeptide from UDP-MurNAc-pentapeptide onto the lipid carrier undecaprenyl phosphate, yielding undecaprenyl-pyrophosphoryl-MurNAc-pentapeptide, known as lipid I. The protein is Phospho-N-acetylmuramoyl-pentapeptide-transferase of Synechococcus sp. (strain CC9311).